Reading from the N-terminus, the 349-residue chain is Lachesin (349 aa).

Positions 1–18 (MDLRLYTIFVGFFSVVYA) are cleaved as a signal peptide. Residues 22–127 (PTISYISQEQ…NKITAEVDLQ (106 aa)) form the Ig-like V-type domain. The cysteines at positions 43 and 110 are disulfide-linked. Ig-like C2-type domains are found at residues 132–218 (PVIS…IAVE) and 222–315 (PPVI…VELF). N-linked (GlcNAc...) asparagine glycosylation is present at Asn137. 2 disulfide bridges follow: Cys154–Cys201 and Cys244–Cys299. Gly332 carries the GPI-anchor amidated glycine lipid modification. A propeptide spans 333-349 (DAAEISTSMALILISTI) (removed in mature form).

The N-terminus is blocked. Expressed by all neurogenic cells early, but only those cells that become neuroblasts continue to express it. Expressed by neuroblasts, ganglion mother cells and neurons early in their lives, but expression becomes restricted to a subset of neurons as development progresses. Expressed by sensory neurons as they delaminate from the body wall ectoderm. It is also present on growing axons of the CNS and PNS and becomes restricted to a subset of axons later in development.

Its subcellular location is the cell membrane. In terms of biological role, may play a role in early neuronal differentiation and axon outgrowth. This is Lachesin (LAC) from Schistocerca americana (American grasshopper).